Reading from the N-terminus, the 161-residue chain is ATP synthase subunit b 1 (161 aa).

The helical transmembrane segment at 1-21 (MFATAEFWILACLVAFFAILG) threads the bilayer.

Belongs to the ATPase B chain family. F-type ATPases have 2 components, F(1) - the catalytic core - and F(0) - the membrane proton channel. F(1) has five subunits: alpha(3), beta(3), gamma(1), delta(1), epsilon(1). F(0) has three main subunits: a(1), b(2) and c(10-14). The alpha and beta chains form an alternating ring which encloses part of the gamma chain. F(1) is attached to F(0) by a central stalk formed by the gamma and epsilon chains, while a peripheral stalk is formed by the delta and b chains.

Its subcellular location is the cell inner membrane. Functionally, f(1)F(0) ATP synthase produces ATP from ADP in the presence of a proton or sodium gradient. F-type ATPases consist of two structural domains, F(1) containing the extramembraneous catalytic core and F(0) containing the membrane proton channel, linked together by a central stalk and a peripheral stalk. During catalysis, ATP synthesis in the catalytic domain of F(1) is coupled via a rotary mechanism of the central stalk subunits to proton translocation. Its function is as follows. Component of the F(0) channel, it forms part of the peripheral stalk, linking F(1) to F(0). In Parvibaculum lavamentivorans (strain DS-1 / DSM 13023 / NCIMB 13966), this protein is ATP synthase subunit b 1.